Here is a 790-residue protein sequence, read N- to C-terminus: Phenylalanine--tRNA ligase beta subunit (790 aa).

A tRNA-binding domain is found at 39-154; the sequence is PDSLNTVVTG…ENTPLGESAC (116 aa). Positions 404–483 constitute a B5 domain; it reads SDPLSLNIRP…FVQKTQKILP (80 aa). Residues aspartate 457, aspartate 463, glutamate 466, and glutamate 467 each coordinate Mg(2+). Residues 694–790 enclose the FDX-ACB domain; sequence PIYPSSSRDI…NLANIGKGNS (97 aa).

Belongs to the phenylalanyl-tRNA synthetase beta subunit family. Type 1 subfamily. As to quaternary structure, tetramer of two alpha and two beta subunits. Mg(2+) serves as cofactor.

Its subcellular location is the cytoplasm. The enzyme catalyses tRNA(Phe) + L-phenylalanine + ATP = L-phenylalanyl-tRNA(Phe) + AMP + diphosphate + H(+). This chain is Phenylalanine--tRNA ligase beta subunit (pheT), found in Chlamydia muridarum (strain MoPn / Nigg).